The following is a 936-amino-acid chain: MutS protein homolog 4 (936 aa).

2 disordered regions span residues 1–83 (MLRP…AQGS) and 103–133 (GASS…SGYK). The span at 7–20 (SSTSPSAPAVSPSS) shows a compositional bias: low complexity. Residues 35–55 (LQETPQSRPSVQVVSASTCPG) show a composition bias toward polar residues. An ATP-binding site is contributed by 680-687 (GPNMSGKS).

It belongs to the DNA mismatch repair MutS family. As to quaternary structure, heterooligomer of MSH4 and MSH5. As to expression, highly expressed in testis. Also expressed in the ovary.

It is found in the chromosome. In terms of biological role, involved in meiotic recombination. Required for reciprocal recombination and proper segregation of homologous chromosomes at meiosis. The chain is MutS protein homolog 4 (MSH4) from Homo sapiens (Human).